The following is a 373-amino-acid chain: Chorismate synthase (373 aa).

Residue Arg-46 participates in NADP(+) binding. FMN-binding positions include 123 to 125, 250 to 251, Gly-295, 310 to 314, and Arg-337; these read RSS, NA, and KPTPS.

It belongs to the chorismate synthase family. FMNH2 is required as a cofactor.

The catalysed reaction is 5-O-(1-carboxyvinyl)-3-phosphoshikimate = chorismate + phosphate. It participates in metabolic intermediate biosynthesis; chorismate biosynthesis; chorismate from D-erythrose 4-phosphate and phosphoenolpyruvate: step 7/7. In terms of biological role, catalyzes the anti-1,4-elimination of the C-3 phosphate and the C-6 proR hydrogen from 5-enolpyruvylshikimate-3-phosphate (EPSP) to yield chorismate, which is the branch point compound that serves as the starting substrate for the three terminal pathways of aromatic amino acid biosynthesis. This reaction introduces a second double bond into the aromatic ring system. This is Chorismate synthase from Methanococcus aeolicus (strain ATCC BAA-1280 / DSM 17508 / OCM 812 / Nankai-3).